The sequence spans 331 residues: Flagellar P-ring protein (331 aa).

An N-terminal signal peptide occupies residues 1–22; it reads MRKVTIFIIIIVALTGFGSVRI.

Belongs to the FlgI family. In terms of assembly, the basal body constitutes a major portion of the flagellar organelle and consists of four rings (L,P,S, and M) mounted on a central rod.

It localises to the periplasm. It is found in the bacterial flagellum basal body. Assembles around the rod to form the L-ring and probably protects the motor/basal body from shearing forces during rotation. This Pseudothermotoga lettingae (strain ATCC BAA-301 / DSM 14385 / NBRC 107922 / TMO) (Thermotoga lettingae) protein is Flagellar P-ring protein.